A 170-amino-acid polypeptide reads, in one-letter code: Protein-lysine myristoyltransferase HlyC (170 aa).

H23 is an active-site residue. H151 is a heme binding site.

Belongs to the RTX toxin acyltransferase family. Monomer. Proteolytically cleaved by the protease systems ClpAP, ClpXP and FtsH, leading to its degradation.

It localises to the cytoplasm. It carries out the reaction tetradecanoyl-[ACP] + L-lysyl-[protein] = N(6)-tetradecanoyl-L-lysyl-[protein] + holo-[ACP] + H(+). The acyltransferase activity is inhibited by heme. In terms of biological role, protein-lysine myristoyltransferase that catalyzes myristoylation of the protoxin (HlyA) at two internal lysine residues, thereby converting it to the active toxin. In Escherichia coli, this protein is Protein-lysine myristoyltransferase HlyC.